Here is a 720-residue protein sequence, read N- to C-terminus: 1,4-alpha-glucan branching enzyme GlgB 2 (720 aa).

Catalysis depends on aspartate 398, which acts as the Nucleophile. Glutamate 451 serves as the catalytic Proton donor.

This sequence belongs to the glycosyl hydrolase 13 family. GlgB subfamily. Monomer.

The catalysed reaction is Transfers a segment of a (1-&gt;4)-alpha-D-glucan chain to a primary hydroxy group in a similar glucan chain.. It functions in the pathway glycan biosynthesis; glycogen biosynthesis. Its function is as follows. Catalyzes the formation of the alpha-1,6-glucosidic linkages in glycogen by scission of a 1,4-alpha-linked oligosaccharide from growing alpha-1,4-glucan chains and the subsequent attachment of the oligosaccharide to the alpha-1,6 position. This is 1,4-alpha-glucan branching enzyme GlgB 2 from Xanthomonas oryzae pv. oryzae (strain KACC10331 / KXO85).